The following is a 491-amino-acid chain: Subtilase-type proteinase RRT12 (491 aa).

The first 17 residues, 1-17 (MKPQCILISLLVNLAYA), serve as a signal peptide directing secretion. N-linked (GlcNAc...) asparagine glycosylation is found at N38, N64, N106, and N121. In terms of domain architecture, Peptidase S8 spans 142-442 (PFDVGDKDRY…FPRLNIEAIA (301 aa)). Active-site charge relay system residues include D174 and H205. Residues N268 and N356 are each glycosylated (N-linked (GlcNAc...) asparagine). S365 (charge relay system) is an active-site residue. A glycan (N-linked (GlcNAc...) asparagine) is linked at N449.

Belongs to the peptidase S8 family. Post-translationally, N-glycosylated.

It localises to the spore wall. Functionally, subtilisin-related protease involved in the formation of a protective dityrosine layer required for spore wall assembly. Identified in a screen for mutants with increased levels of rDNA transcription. This Saccharomyces cerevisiae (strain ATCC 204508 / S288c) (Baker's yeast) protein is Subtilase-type proteinase RRT12 (RRT12).